The chain runs to 294 residues: F-box protein SKIP3 (294 aa).

Residues 21–67 (SSTLDSLPEGCISNIISFTSPEDACVAAAVSKIFESAVKSDIVWEKF) enclose the F-box domain.

Part of a SCF (SKP1-cullin-F-box) protein ligase complex. Interacts with SKP1A/ASK1.

It participates in protein modification; protein ubiquitination. This chain is F-box protein SKIP3 (SKIP3), found in Arabidopsis thaliana (Mouse-ear cress).